We begin with the raw amino-acid sequence, 1067 residues long: Zinc finger MIZ domain-containing protein 1 (1067 aa).

The interval 1 to 120 is sufficient for transactivation activity; sufficient for interaction with NOTCH1; that stretch reads MNSMDRHIQQ…HQKSRQSDPP (120 aa). A Glycyl lysine isopeptide (Lys-Gly) (interchain with G-Cter in SUMO2) cross-link involves residue Lys91. 2 disordered regions span residues 112-141 and 327-542; these read QKSRQSDPPGKLPMQPPLSSMSSMKPTLSH and NSQF…PFPP. Low complexity predominate over residues 128–141; sequence PLSSMSSMKPTLSH. Polar residues predominate over residues 413-429; sequence YGNQQYGPNSQFPTQPG. A compositionally biased stretch (pro residues) spans 431–440; the sequence is YPAPNPPRPL. Over residues 479–497 the composition is skewed to low complexity; it reads NNTFSGSSYSNYSQGNVNR. The span at 510-521 shows a compositional bias: pro residues; the sequence is SPVPGNPTPPMT. The SP-RING-type zinc-finger motif lies at 727–808; sequence GEDGVEQTAI…MWGILNAIQH (82 aa). Zn(2+)-binding residues include Cys758, His760, Cys781, and Cys784. Residues Lys834 and Lys843 each participate in a glycyl lysine isopeptide (Lys-Gly) (interchain with G-Cter in SUMO2) cross-link. The segment at 837–1067 is transactivation domain; sequence PDGIPSKRFK…DDLLSLFENN (231 aa). Pro residues predominate over residues 868 to 879; that stretch reads GPSPYPLPPPPG. The tract at residues 868–1067 is disordered; that stretch reads GPSPYPLPPP…DDLLSLFENN (200 aa). 2 stretches are compositionally biased toward polar residues: residues 881–895 and 951–961; these read TNSNDYSSQGNNYQG and SSDQPHPSIQQ. The span at 981–996 shows a compositional bias: pro residues; sequence APPPPPSQPPRQPPQA. A compositionally biased stretch (low complexity) spans 1040-1067; the sequence is PDELLSYLDPPDLPSNSNDDLLSLFENN.

As to quaternary structure, interacts with AR, but not with ESR1, NR3C1, PGR, THRB nor VDR. Interacts with NOTCH1 and RBPJ. Interacts with SMARCA4. Interacts (via SP-RING-type domain) with SMAD3 and SMAD4 (via MH2 domain). In terms of tissue distribution, expressed most abundantly in ovary and, at lower levels, in prostate, spleen and testis. Weak expression, if any, in thymus, small intestine, colon and peripheral blood leukocytes.

It is found in the nucleus. Its subcellular location is the nucleoplasm. The protein localises to the cytoplasm. Acts as a transcriptional coactivator. Increases ligand-dependent transcriptional activity of AR and promotes AR sumoylation. The stimulation of AR activity is dependent upon sumoylation. Also functions as a transcriptional coactivator in the TGF-beta signaling pathway by increasing the activity of the SMAD3/SMAD4 transcriptional complex. Involved in transcriptional activation of a subset of NOTCH1 target genes including MYC. Involved in thymocyte and T cell development. Involved in the regulation of postmitotic positioning of pyramidal neurons in the developing cerebral cortex. The sequence is that of Zinc finger MIZ domain-containing protein 1 from Homo sapiens (Human).